Here is a 308-residue protein sequence, read N- to C-terminus: Very-long-chain enoyl-CoA reductase (308 aa).

Over 1 to 86 (MKHYEVEIRD…YFRDLGAQIS (86 aa)) the chain is Cytoplasmic. K22 bears the N6-acetyllysine mark. Phosphoserine is present on S58. K60 bears the N6-acetyllysine mark. A helical transmembrane segment spans residues 87–106 (WVTVFLTEYAGPLFIYLLFY). Residues 107-124 (FRVPFIYGRKYDFTSSRH) are Lumenal-facing. A helical membrane pass occupies residues 125 to 147 (TVVHLACMCHSFHYIKRLLETLF). At 148-158 (VHRFSHGTMPL) the chain is on the cytoplasmic side. A helical membrane pass occupies residues 159–180 (RNIFKNCTYYWGFAAWMAYYIN). At 181-189 (HPLYTPPTY) the chain is on the lumenal side. Residues 190–216 (GVQQVKLALAIFVICQLGNFSIHMALR) traverse the membrane as a helical segment. The Cytoplasmic segment spans residues 217–245 (DLRPAGSKTRKIPYPTKNPFTWLFLLVSC). A helical membrane pass occupies residues 246 to 262 (PNYTYEVGSWIGFAIMT). At 263–264 (QC) the chain is on the lumenal side. The chain crosses the membrane as a helical span at residues 265–292 (VPVALFSLVGFTQMTIWAKGKHRSYLKE). The Cytoplasmic portion of the chain corresponds to 293 to 308 (FRDYPPLRMPIIPFLL).

The protein belongs to the steroid 5-alpha reductase family. As to quaternary structure, interacts with ELOVL1 and LASS2. Glycosylated. Expressed at high levels in brain and is also found at lower levels in several other tissues.

It localises to the endoplasmic reticulum membrane. The enzyme catalyses a very-long-chain 2,3-saturated fatty acyl-CoA + NADP(+) = a very-long-chain (2E)-enoyl-CoA + NADPH + H(+). It catalyses the reaction octadecanoyl-CoA + NADP(+) = (2E)-octadecenoyl-CoA + NADPH + H(+). The catalysed reaction is (2E,7Z,10Z,13Z,16Z)-docosapentaenoyl-CoA + NADPH + H(+) = (7Z,10Z,13Z,16Z)-docosatetraenoyl-CoA + NADP(+). It carries out the reaction (2E,7Z,10Z,13Z,16Z,19Z)-docosahexaenoyl-CoA + NADPH + H(+) = (7Z,10Z,13Z,16Z,19Z)-docosapentaenoyl-CoA + NADP(+). The enzyme catalyses (2E,8Z,11Z,14Z)-eicosatetraenoyl-CoA + NADPH + H(+) = (8Z,11Z,14Z)-eicosatrienoyl-CoA + NADP(+). It catalyses the reaction (2E)-hexadecenoyl-CoA + NADPH + H(+) = hexadecanoyl-CoA + NADP(+). It functions in the pathway lipid metabolism; fatty acid biosynthesis. The protein operates within lipid metabolism; sphingolipid metabolism. Functionally, involved in both the production of very long-chain fatty acids for sphingolipid synthesis and the degradation of the sphingosine moiety in sphingolipids through the sphingosine 1-phosphate metabolic pathway. Catalyzes the last of the four reactions of the long-chain fatty acids elongation cycle. This endoplasmic reticulum-bound enzymatic process, allows the addition of 2 carbons to the chain of long- and very long-chain fatty acids/VLCFAs per cycle. This enzyme reduces the trans-2,3-enoyl-CoA fatty acid intermediate to an acyl-CoA that can be further elongated by entering a new cycle of elongation. Thereby, it participates in the production of VLCFAs of different chain lengths that are involved in multiple biological processes as precursors of membrane lipids and lipid mediators. Catalyzes the saturation step of the sphingosine 1-phosphate metabolic pathway, the conversion of trans-2-hexadecenoyl-CoA to palmitoyl-CoA. This is Very-long-chain enoyl-CoA reductase (Tecr) from Rattus norvegicus (Rat).